Consider the following 878-residue polypeptide: Aconitate hydratase A (878 aa).

Positions 426, 492, and 495 each coordinate [4Fe-4S] cluster.

The protein belongs to the aconitase/IPM isomerase family. Monomer. [4Fe-4S] cluster serves as cofactor.

The enzyme catalyses citrate = D-threo-isocitrate. It carries out the reaction (2S,3R)-3-hydroxybutane-1,2,3-tricarboxylate = 2-methyl-cis-aconitate + H2O. Its pathway is carbohydrate metabolism; tricarboxylic acid cycle; isocitrate from oxaloacetate: step 2/2. It participates in organic acid metabolism; propanoate degradation. In terms of biological role, involved in the catabolism of short chain fatty acids (SCFA) via the tricarboxylic acid (TCA)(acetyl degradation route) and probably the 2-methylcitrate cycle I (propionate degradation route). Catalyzes the reversible isomerization of citrate to isocitrate via cis-aconitate. Could catalyze the hydration of 2-methyl-cis-aconitate to yield (2R,3S)-2-methylisocitrate. The apo form of AcnA functions as a RNA-binding regulatory protein. The protein is Aconitate hydratase A (acnA) of Rickettsia felis (strain ATCC VR-1525 / URRWXCal2) (Rickettsia azadi).